The following is a 218-amino-acid chain: 3-dehydroquinate dehydratase (218 aa).

3-dehydroquinate contacts are provided by residues 29-31 (EFR) and Arg56. His116 (proton donor/acceptor) is an active-site residue. Lys142 acts as the Schiff-base intermediate with substrate in catalysis. Positions 180, 200, and 204 each coordinate 3-dehydroquinate.

This sequence belongs to the type-I 3-dehydroquinase family. Homodimer.

The catalysed reaction is 3-dehydroquinate = 3-dehydroshikimate + H2O. It functions in the pathway metabolic intermediate biosynthesis; chorismate biosynthesis; chorismate from D-erythrose 4-phosphate and phosphoenolpyruvate: step 3/7. Involved in the third step of the chorismate pathway, which leads to the biosynthesis of aromatic amino acids. Catalyzes the cis-dehydration of 3-dehydroquinate (DHQ) and introduces the first double bond of the aromatic ring to yield 3-dehydroshikimate. The sequence is that of 3-dehydroquinate dehydratase from Methanococcus vannielii (strain ATCC 35089 / DSM 1224 / JCM 13029 / OCM 148 / SB).